Reading from the N-terminus, the 700-residue chain is Chondroitinase-AC (700 aa).

The first 22 residues, 1-22, serve as a signal peptide directing secretion; that stretch reads MKKLFVTCIVFFSILSPALLIA. Active-site residues include H225, Y234, and R288. O-linked (Man...) serine glycosylation occurs at S328. 4 residues coordinate Ca(2+): E405, D407, D416, and Y417. Residue S455 is glycosylated (O-linked (Man...) serine).

The protein belongs to the polysaccharide lyase 8 family. As to quaternary structure, monomer. The cofactor is Ca(2+).

The catalysed reaction is Eliminative degradation of polysaccharides containing 1,4-beta-D-hexosaminyl and 1,3-beta-D-glucuronosyl linkages to disaccharides containing 4-deoxy-beta-D-gluc-4-enuronosyl groups.. This chain is Chondroitinase-AC (cslA), found in Pedobacter heparinus (strain ATCC 13125 / DSM 2366 / CIP 104194 / JCM 7457 / NBRC 12017 / NCIMB 9290 / NRRL B-14731 / HIM 762-3).